The chain runs to 183 residues: MSHTDLTPCTRVLASSGTVPIAEELLARVLEPYSCKGCRYLIDAQYSATEDSVLAYGNFTIGESAYIRSTGHFNAVELILCFNQLAYSAFAPAVLNEEIRVLRGWSIDDYCQHQLSSMLIRKASSRFRKPLNPQKFSARLLCRDLQVIERTWRYLKVPCVIEFWDENGGAASGEIELAALNIP.

It belongs to the FcoT family.

It carries out the reaction a (3R)-3-[(carboxymethyl)amino]fatty acid + holo-[ACP] + H(+) = a (2E)-enoyl-[ACP] + glycine + H2O. It catalyses the reaction (3R)-3-[(carboxylmethyl)amino]decanoate + holo-[ACP] + H(+) = (2E)-decenoyl-[ACP] + glycine + H2O. The enzyme catalyses a fatty acyl-CoA + H2O = a fatty acid + CoA + H(+). Functionally, involved in the biosynthesis of a unique class of isonitrile lipopeptides (INLPs) that seem to play a role in metal acquisition. Catalyzes a Michael addition of glycine to the beta-position of an alpha,beta-unsaturated fatty acyl-[ACP], producing a (3R)-3-[(carboxymethyl)amino]fatty acid. Acts on the (2E)-decenoyl moiety loaded on the acyl-carrier protein (ACP) BQ2027_MB0103, forming the product (3R)-3-[(carboxymethyl)amino]decanoate released from the ACP. Displays thioesterase activity with a preference for long chain fatty acyl groups. The chain is (2E)-enoyl-[ACP] glycyltransferase from Mycobacterium bovis (strain ATCC BAA-935 / AF2122/97).